We begin with the raw amino-acid sequence, 1048 residues long: Ankyrin repeat domain-containing protein 27 (1048 aa).

Residues Met-1–Pro-372 are sufficient for GEF activity towards RAB21. Residues Ala-233 to Thr-371 enclose the VPS9 domain. ANK repeat units lie at residues Thr-396–Ala-426, Arg-462–Ala-491, His-495–Val-524, Asn-528–Arg-557, Lys-564–Val-593, and Leu-597–Pro-627. Residues Thr-396–Asp-460 form a sufficient for interaction with VPS29 region. An interaction with RAB38 region spans residues Pro-451–Thr-600. The interval Pro-451–Ile-729 is interaction with RAB32. Positions His-618–Pro-627 are enriched in basic and acidic residues. Positions His-618 to Ser-650 are disordered. Low complexity predominate over residues Ser-638–Ser-650. The interval Phe-658 to Asp-707 is required for interaction with VAMP7. ANK repeat units lie at residues Arg-668–Asp-698, Asp-742–Ala-771, Ser-775–Lys-804, Ser-808–Ala-837, and Lys-841–Ile-870. A sufficient for interaction with VPS29 region spans residues Thr-692–Ser-745. Residues Glu-949 to Val-962 are compositionally biased toward basic and acidic residues. The tract at residues Glu-949–Arg-1019 is disordered. Phosphoserine is present on residues Ser-961 and Ser-969. The span at Thr-979–Glu-995 shows a compositional bias: polar residues. Residues Glu-996–Val-1006 show a composition bias toward basic and acidic residues. A Phosphothreonine modification is found at Thr-1022.

In terms of assembly, interacts with RAB21 (GDP-bound form), VPS29, KIF5A, KIF5C, GOLGA4. Interacts with RAB32 (GTP-bound form), RAB38 (GTP-bound form), VAMP7. Interacts with low affinity with RAB5. ANKRD27:RAB32 heterodimers can homodimerize to form tetramers. Can interact with RAB38 or RAB32, VPS29 and VAMP7 simultaneously. A decreased interaction with RAB32 seen in the presence of SGSM2.

The protein resides in the early endosome. Its subcellular location is the late endosome. The protein localises to the cytoplasmic vesicle membrane. It localises to the lysosome. It is found in the cell membrane. The protein resides in the melanosome. Its subcellular location is the cytoplasmic vesicle. Functionally, may be a guanine exchange factor (GEF) for Rab21, Rab32 and Rab38 and regulate endosome dynamics. May regulate the participation of VAMP7 in membrane fusion events; in vitro inhibits VAMP7-mediated SNARE complex formation by trapping VAMP7 in a closed, fusogenically inactive conformation. Involved in peripheral melanosomal distribution of TYRP1 in melanocytes; the function, which probably is implicating vesicle-trafficking, includes cooperation with Rab32, Rab38 and VAMP7. Involved in the regulation of neurite growth; the function seems to require its GEF activity, probably towards Rab21, and VAMP7 but not Rab32/38. Proposed to be involved in Golgi sorting of VAMP7 and transport of VAMP7 vesicles to the cell surface; the function seems to implicate kinesin heavy chain isoform 5 proteins, GOLGA4, RAB21 and MACF1. Required for the colocalization of VAMP7 and Rab21, probably on TGN sites. Involved in GLUT1 endosome-to-plasma membrane trafficking; the function is dependent of association with VPS29. Regulates the proper trafficking of melanogenic enzymes TYR, TYRP1 and DCT/TYRP2 to melanosomes in melanocytes. The protein is Ankyrin repeat domain-containing protein 27 (Ankrd27) of Mus musculus (Mouse).